The primary structure comprises 74 residues: ATP synthase subunit 9, mitochondrial (74 aa).

2 consecutive transmembrane segments (helical) span residues 12–32 (LATIGLAGAGVGVGLVFAALI) and 50–70 (ILGFALTEAIGLFALMMAFLL).

It belongs to the ATPase C chain family. F-type ATPases have 2 components, CF(1) - the catalytic core - and CF(0) - the membrane proton channel. CF(1) has five subunits: alpha(3), beta(3), gamma(1), delta(1), epsilon(1). CF(0) has three main subunits: a, b and c.

The protein localises to the mitochondrion membrane. In terms of biological role, mitochondrial membrane ATP synthase (F(1)F(0) ATP synthase or Complex V) produces ATP from ADP in the presence of a proton gradient across the membrane which is generated by electron transport complexes of the respiratory chain. F-type ATPases consist of two structural domains, F(1) - containing the extramembraneous catalytic core and F(0) - containing the membrane proton channel, linked together by a central stalk and a peripheral stalk. During catalysis, ATP synthesis in the catalytic domain of F(1) is coupled via a rotary mechanism of the central stalk subunits to proton translocation. Part of the complex F(0) domain. A homomeric c-ring of probably 10 subunits is part of the complex rotary element. The polypeptide is ATP synthase subunit 9, mitochondrial (Rhizopus oryzae (Mucormycosis agent)).